The sequence spans 643 residues: E3 ubiquitin-protein ligase AMFR (643 aa).

6 helical membrane-spanning segments follow: residues 82–102 (LFVW…AKLI), 122–142 (FWNF…VQTV), 186–206 (VLSL…VCCV), 215–235 (TLAF…HVIL), 254–274 (GTYV…LDLM), and 276–296 (HIHM…VIFM). The RING-type zinc finger occupies 341-379 (CAICWDSMQAARKLPCGHLFHNSCLRSWLEQDTSCPTCR). The helical transmembrane segment at 429-449 (IASWLPSFSVEVMHTTNILGI) threads the bilayer. In terms of domain architecture, CUE spans 456-498 (QLNAMAHQIQEMFPQVPYHLVLQDLQMTRSVEITTDNILEGRI). The interval 504-535 (TQRSDSLRPALNSPVERPSPDLEEGEASVQTE) is disordered. Phosphoserine is present on residues S516 and S542. A disordered region spans residues 598–624 (LNKSSEDDGASERLLPSEGTSSDPVTL). The interval 622 to 640 (VTLRRRMLAAAAERRLQRQ) is VCP/p97-interacting motif (VIM).

Interacts with RNF5. Also forms an ERAD complex containing VCP/p97, NGLY1; PSMC1; SAKS1 and RAD23B required for coupling retrotranslocation, ubiquitination and deglycosylation. Interacts with DERL1. Interacts (through a region distinct from the RING finger) with UBE2G2/UBC7. Component of the VCP/p97-AMFR/gp78 complex that enhances VCP/p97 binding to polyubiquitinated proteins for their degradation by the endoplasmic reticulum-associated degradation (ERAD) pathway. Interacts (via the VIM) with VCP/p97. Interacts (via its membrane domain) with INSIG1; the interaction initiates the sterol-mediated ubiquitination and degradation of HMGCR by the ERAD pathway. Interacts with AUP1, UBE2G2 and RNF139/TRC8; interaction with AUP1 facilitates interaction of AMFR with ubiquitin-conjugating enzyme UBE2G2 and ubiquitin ligase RNF139, leading to sterol-induced ubiquitination of HNGCR and its subsequent proteasomal degradation. Interacts with BAG6. Interacts with USP13 (via UBA 2 domain); the interaction is direct. Interacts with LMBR1L, UBAC2 and CTNNB1. Interacts with C18orf32. Post-translationally, palmitoylation of the RING-type zing finger by ZDHHC6 promotes localization to the peripheral endoplasmic reticulum. In terms of tissue distribution, expressed in heart, brain, liver, lung, skeletal muscle, kidney and testis. Not detected in spleen.

It localises to the endoplasmic reticulum membrane. The enzyme catalyses [E2 ubiquitin-conjugating enzyme]-S-ubiquitinyl-L-cysteine + [acceptor protein]-L-cysteine = [E2 ubiquitin-conjugating enzyme]-L-cysteine + [acceptor protein]-S-ubiquitinyl-L-cysteine.. It participates in protein modification; protein ubiquitination. Its function is as follows. E3 ubiquitin-protein ligase that mediates the polyubiquitination of lysine and cysteine residues on target proteins, such as CD3D, CYP3A4, CFTR, INSIG1, SOAT2/ACAT2 and APOB for proteasomal degradation. Component of a VCP/p97-AMFR/gp78 complex that participates in the final step of endoplasmic reticulum-associated degradation (ERAD). The VCP/p97-AMFR/gp78 complex is involved in the sterol-accelerated ERAD degradation of HMGCR through binding to the HMGCR-INSIG1 complex at the ER membrane. In addition, interaction of AMFR with AUP1 facilitates interaction of AMFR with ubiquitin-conjugating enzyme UBE2G2 and ubiquitin ligase RNF139, leading to sterol-induced HMGCR ubiquitination. The ubiquitinated HMGCR is then released from the ER by the complex into the cytosol for subsequent destruction. In addition to ubiquitination on lysine residues, catalyzes ubiquitination on cysteine residues: together with INSIG1, mediates polyubiquitination of SOAT2/ACAT2 at 'Cys-277', leading to its degradation when the lipid levels are low. Catalyzes ubiquitination and subsequent degradation of INSIG1 when cells are depleted of sterols. Mediates polyubiquitination of INSIG2 at 'Cys-215' in some tissues, leading to its degradation. Also regulates ERAD through the ubiquitination of UBL4A a component of the BAG6/BAT3 complex. Also acts as a scaffold protein to assemble a complex that couples ubiquitination, retranslocation and deglycosylation. Mediates tumor invasion and metastasis as a receptor for the GPI/autocrine motility factor. In association with LMBR1L and UBAC2, negatively regulates the canonical Wnt signaling pathway in the lymphocytes by promoting the ubiquitin-mediated degradation of CTNNB1 and Wnt receptors FZD6 and LRP6. Regulates NF-kappa-B and MAPK signaling pathways by mediating 'Lys-27'-linked polyubiquitination of TAB3 and promoting subsequent TAK1/MAP3K7 activation. The chain is E3 ubiquitin-protein ligase AMFR (Amfr) from Mus musculus (Mouse).